The primary structure comprises 281 residues: MESVVDGSSQSRHQSENDRLNIQHALIKSIMGGKLLMAPVNLERPDLRILDSGTAQANWLLDLAALVPTTAQLTGTDIAPEQFPPPSQRPPNMTLQKQSIFDPWNEAMLGSFDVVHQRFVLAACQSDEHGQRAVADLLALTKPGGWIELHEGNMLAIQEGEAHSAMMRFRDIAVAAWVSIGQVPDPGPRLTDWMRDAGVVDMHEEVQTIGLGAAARNQQEAEWSTELCLNMLRTIRRMTAGKGADAPSEQEFDTLEVALREELQEVGNQWYYYLAYGRRRT.

Belongs to the methyltransferase superfamily. LaeA methyltransferase family.

The protein operates within secondary metabolite biosynthesis. In terms of biological role, N-methyltransferase; part of the gene cluster that mediates the biosynthesis of an unusual class of epipolythiodioxopiperazines (ETPs) lacking the reactive thiol group important for toxicity. Firstly, L-tyrosine is prenylated by tcpD, before undergoing condensation with L-glycine in a reaction catalyzed by the NRPS tcpP leading to the diketopiperazine (DKP) backbone. Afterwards the alpha-carbon of tyrosine is oxidized by the cytochrome P450 tcpC to form a hydroxyl group. However, in contrast other ETP biosynthesis pathways studied so far, tcpC is not able to bishydroxylate the DKP at both alpha-carbon positions, but hydroxylates the alpha-carbon of the tyrosine part and the nitrogen of the glycine part. The next steps involve an alpha,beta-elimination reaction catalyzed by tcpI, a methylation by the methyltransferase tcpN the action of the four enzyme cascade tcpG/K/J/I. Due to a dysfunctional cytochrome P450 monooxygenase tcpC, the pathway leads to the biosynthesis of probable non-toxic metabolites lacking the reactive thiol group. This Claviceps purpurea (strain 20.1) (Ergot fungus) protein is N-methyltransferase tcpN.